A 1418-amino-acid chain; its full sequence is MDETDPVPDMSLLPDTVPVVVSGDGSAAGIQLCPALILGSPQALPGAIKHIYSRLAAAASEVDQGVPDLIISLISHGNSLSTKYMSSVENGLKSFLIGCGTWLISSGEVNDPMSRVASGALKNVLPQLEHQAEVLHILVNSDDMIASDTTNSKSVVDTSLNTLLLICRKEPNDSYETVASSIAKLRAATAVKLAHPPPALLIGVPSEPMSPSTYGNSAAILLSPSNDKRPFPVAIFAGASKESLIELLFFVEHGIPVIILQDSCELCAILHSSHLLLETSNFDNDKFISWLRSQLYPLGLADCYTLITKLLVSSNSGDVQLIEFIDSSQLSELSSVVVDRCLECYATTGEERQVLLLAAKLNSPSVLSSMDVAAQLDEELLTMILCECITKDDQLHFLSSVLQLSPPIRVTSNMLIRMMHHADEHFFTTIVLCQCMGYSYIPSEIDPRFANDIQKLVKKLSFGVDNLFDPNVFCNDSSHRDKHESIRILAIWSLLLHRPGIVKCLAAFADEPVAFSMVLSRIARSLGHESHDWHFYEKSLNTLSDSLSGSATTLFDTVFSTSPAKAYQLLCQPMEYFYGFNMTQLAFHCNAREIIAHECCQRWVHRKLYGNLQAKNFPIFLPKWAKICISAVLIIPVKFWMLVRPRERTKQDTVSPTVALLDVGKFPQKQRAISTYSVISSRSEALTALTAPLSTAFGFNSALNGAESATPQSMVFPLNIEEIDKDPRPFGKKNRIRRAHAPTLSTFYSTPIVKYWLSLLFRIVFICCLAYSVVLPGCGSNLWDTGMWVWSFFWWIENCFVLTARARKIPLSLMPWRVFDVFAFFVFLILLLVMKVFPVTPVLEVLGIDSIYSAKVVSAFFVLYVSYSTLFTYIPLSDIFGPMIVRVKLMLLRDFTNFLFMIALVMLSSAVAIQAVVFPDRPVTMEVFRKTLSWIWLSLFTTDLSNLSESETCRKSFLGAPKRYCSSVGQYANPSCPSQSLPAYLIVIEYFVILKLLLWPILFAFFSKTAKNVDDEADKIWRFQLYSLAEDFRLRPPLPPPLTIFCLICSACCRFSNSFSGFFSDFDHPDFEARDKCRTTWKFGSIYRNPSVPFKRNEFVNSFWRKLSMEQWKNTQQKAKISANKSELQELHNIHNHIRMMTLRDSYENSGTRKASELQFFEKYPESNILKISVNMVSKPWTVLVPRYNPPFYCKPAEDFPSDVQKYVDIATEQNVGELKRIWRSRQANDVTSSNDKCWKLSAAGFPLNPNGRTGMAGRGNHPRFGANRRCYYVVLSGGVEAKCQVLVDSQKNIPNEWHLENSSKDEHLTSILKMIGISDSDAHMFSMRRLDSSIITADKRIPSNDTSPAHLASEVAENENDTDNAWTEHDVWAISLRERRIITTIIGYSWLPTSAIRGTVLPWQADLVFRAKTIYGL.

7 consecutive transmembrane segments (helical) span residues 617-637 (FPIFLPKWAKICISAVLIIPV), 755-775 (YWLSLLFRIVFICCLAYSVVL), 782-802 (LWDTGMWVWSFFWWIENCFVL), 818-838 (VFDVFAFFVFLILLLVMKVFP), 856-876 (VVSAFFVLYVSYSTLFTYIPL), 898-918 (FLFMIALVMLSSAVAIQAVVF), and 986-1006 (IVIEYFVILKLLLWPILFAFF).

The protein localises to the membrane. Functionally, plays a major role in programmed cell death. The chain is Protein ced-11 (ced-11) from Caenorhabditis elegans.